A 322-amino-acid polypeptide reads, in one-letter code: Ig gamma-2A chain C region (322 aa).

Ig-like domains are found at residues 6–98, 115–212, and 221–317; these read PSVY…KKIV, VFIF…KSIS, and PQVY…KSLS. Intrachain disulfides connect Cys-27-Cys-82, Cys-136-Cys-196, and Cys-242-Cys-300. The N-linked (GlcNAc...) asparagine glycan is linked to Asn-172.

The sequence is that of Ig gamma-2A chain C region (Igg-2a) from Rattus norvegicus (Rat).